Consider the following 395-residue polypeptide: Dihydrolipoyllysine-residue succinyltransferase component of 2-oxoglutarate dehydrogenase complex (395 aa).

The 76-residue stretch at 2–77 (RVKIIVPSLG…AVGEEIGEIN (76 aa)) folds into the Lipoyl-binding domain. The residue at position 43 (Lys-43) is an N6-lipoyllysine. The 38-residue stretch at 111 to 148 (TLAPSVQKLVTENKLDPNNIKGTGRDGRITKGDVLATI) folds into the Peripheral subunit-binding (PSBD) domain. Active-site residues include His-366 and Asp-370.

It belongs to the 2-oxoacid dehydrogenase family. Forms a 24-polypeptide structural core with octahedral symmetry. Part of the 2-oxoglutarate dehydrogenase (OGDH) complex composed of E1 (2-oxoglutarate dehydrogenase), E2 (dihydrolipoamide succinyltransferase) and E3 (dihydrolipoamide dehydrogenase); the complex contains multiple copies of the three enzymatic components (E1, E2 and E3). The cofactor is (R)-lipoate.

It carries out the reaction N(6)-[(R)-dihydrolipoyl]-L-lysyl-[protein] + succinyl-CoA = N(6)-[(R)-S(8)-succinyldihydrolipoyl]-L-lysyl-[protein] + CoA. It functions in the pathway amino-acid degradation; L-lysine degradation via saccharopine pathway; glutaryl-CoA from L-lysine: step 6/6. Its function is as follows. E2 component of the 2-oxoglutarate dehydrogenase (OGDH) complex which catalyzes the second step in the conversion of 2-oxoglutarate to succinyl-CoA and CO(2). The sequence is that of Dihydrolipoyllysine-residue succinyltransferase component of 2-oxoglutarate dehydrogenase complex (sucB) from Rickettsia conorii (strain ATCC VR-613 / Malish 7).